The chain runs to 133 residues: DNA-directed RNA polymerases I and III subunit RPAC2 (133 aa).

At Met1 the chain carries N-acetylmethionine. The tract at residues 1 to 22 (MEEDQELERKMSGVKTSMAEGE) is disordered.

This sequence belongs to the archaeal Rpo11/eukaryotic RPB11/RPC19 RNA polymerase subunit family. Component of the RNA polymerase I and RNA polymerase III complexes consisting of at least 13 and 17 subunits, respectively. The transcriptionally active RNA polymerase III complex consists of a ten-subunit horseshoe-shaped catalytic core composed of POLR3A/RPC1, POLR3B/RPC2, POLR1C/RPAC1, POLR1D/RPAC2, POLR3K/RPC10, POLR2E/RPABC1, POLR2F/RPABC2, POLR2H/RPABC3, POLR2K/RPABC4 and POLR2L/RPABC5; a mobile stalk composed of two subunits POLR3H/RPC8 and CRCP/RPC9, protruding from the core and functioning primarily in transcription initiation; and additional subunits homologous to general transcription factors of the RNA polymerase II machinery, POLR3C/RPC3-POLR3F/RPC6-POLR3G/RPC7 heterotrimer required for transcription initiation and POLR3D/RPC4-POLR3E/RPC5 heterodimer involved in both transcription initiation and termination.

Its subcellular location is the nucleus. DNA-dependent RNA polymerase catalyzes the transcription of DNA into RNA using the four ribonucleoside triphosphates as substrates. Common component of RNA polymerases I and III which synthesize ribosomal RNA precursor pre-rRNA and short non-coding RNAs including 5S rRNA, snRNAs, tRNAs and miRNAs, respectively. This chain is DNA-directed RNA polymerases I and III subunit RPAC2 (POLR1D), found in Bos taurus (Bovine).